Here is a 512-residue protein sequence, read N- to C-terminus: NAD-dependent deacetylase sir2A (512 aa).

The UBP-type zinc finger occupies 7-110; the sequence is IECIHLKDEY…EILENIKSSN (104 aa). Positions 9, 11, 34, 37, 46, 49, 54, 61, 65, 71, 84, and 87 each coordinate Zn(2+). Residues 113–122 are compositionally biased toward basic and acidic residues; the sequence is DKIVPKKDQK. Residues 113–196 are disordered; that stretch reads DKIVPKKDQK…DESSSEGEES (84 aa). The span at 130–175 shows a compositional bias: low complexity; that stretch reads VVPSASITTSSTTTSISKQTTVNNTTTTSSSSTTTTTTTTSTTINN. Acidic residues predominate over residues 176 to 195; sequence NEEEEESESETDESSSEGEE. A Deacetylase sirtuin-type domain is found at 231–503; the sequence is CVLKKPTIEE…LDLIKLLGWE (273 aa). Residue histidine 361 is the Proton acceptor of the active site. Zn(2+) contacts are provided by cysteine 369, cysteine 372, cysteine 393, and cysteine 399.

The protein belongs to the sirtuin family. It depends on Zn(2+) as a cofactor.

The enzyme catalyses N(6)-acetyl-L-lysyl-[protein] + NAD(+) + H2O = 2''-O-acetyl-ADP-D-ribose + nicotinamide + L-lysyl-[protein]. NAD-dependent deacetylase, which plays an important role in the regulation of transcriptional repression. This is NAD-dependent deacetylase sir2A (sir2A) from Dictyostelium discoideum (Social amoeba).